A 152-amino-acid chain; its full sequence is Protein Smg homolog (152 aa).

Belongs to the Smg family.

The polypeptide is Protein Smg homolog (Bordetella avium (strain 197N)).